The primary structure comprises 414 residues: Gamma-glutamyl phosphate reductase (414 aa).

It belongs to the gamma-glutamyl phosphate reductase family.

Its subcellular location is the cytoplasm. It carries out the reaction L-glutamate 5-semialdehyde + phosphate + NADP(+) = L-glutamyl 5-phosphate + NADPH + H(+). Its pathway is amino-acid biosynthesis; L-proline biosynthesis; L-glutamate 5-semialdehyde from L-glutamate: step 2/2. In terms of biological role, catalyzes the NADPH-dependent reduction of L-glutamate 5-phosphate into L-glutamate 5-semialdehyde and phosphate. The product spontaneously undergoes cyclization to form 1-pyrroline-5-carboxylate. The polypeptide is Gamma-glutamyl phosphate reductase (Kosmotoga olearia (strain ATCC BAA-1733 / DSM 21960 / TBF 19.5.1)).